The sequence spans 2036 residues: Ral GTPase-activating protein subunit alpha-1 (2036 aa).

Disordered stretches follow at residues 343–384 (LVSR…SSLC) and 476–497 (EEGE…RNSS). Residues 345-365 (SREESKNDNADKTDRTTEPEQ) are compositionally biased toward basic and acidic residues. Composition is skewed to polar residues over residues 366–384 (SHSN…SSLC) and 486–497 (GTNTADHVRNSS). Phosphoserine occurs at positions 711 and 721. Residues 715–753 (SFSRGWSRDQPGQAPMRQRSATTTGSPGTEKARSIVRQK) are disordered. T754 is modified (phosphothreonine). S773 is subject to Phosphoserine. At T778 the chain carries Phosphothreonine. Phosphoserine is present on residues S797, S860, S861, and S864. Disordered stretches follow at residues 849–910 (SGNA…SDSH) and 982–1009 (TITG…STLN). A compositionally biased stretch (polar residues) spans 850-863 (GNASTMTRRGSSPG). Residues 895 to 910 (SPASAGSSDLISSDSH) show a composition bias toward low complexity. A compositionally biased stretch (polar residues) spans 983–1009 (ITGSESASPVHSPLGSRSQTPSPSTLN). A phosphoserine mark is found at S986, S990, S994, and S1000. Position 1002 is a phosphothreonine (T1002). Residues S1004 and S1478 each carry the phosphoserine modification. The interval 1327–2035 (FTNKTVAHVA…PYHHLPSDAD (709 aa)) is minimal domain that binds to TCF3/E12. Residues 1716–1744 (KQENDVINAILKQHTEEKEFVEKHFNDLN) are a coiled coil. Residues 1796-2004 (LRNLDSRQCR…EERARYLQTI (209 aa)) enclose the Rap-GAP domain.

Component of the heterodimeric RalGAP1 complex with RALGAPB. Heterodimerization is required for activity. Interacts with the HLH region of TCF3/isoform E12. In terms of tissue distribution, widely expressed.

Its subcellular location is the cytoplasm. The protein resides in the nucleus. In terms of biological role, catalytic subunit of the heterodimeric RalGAP1 complex which acts as a GTPase activator for the Ras-like small GTPases RALA and RALB. The polypeptide is Ral GTPase-activating protein subunit alpha-1 (RALGAPA1) (Homo sapiens (Human)).